The primary structure comprises 315 residues: Methionyl-tRNA formyltransferase (315 aa).

113–116 (SILP) is a binding site for (6S)-5,6,7,8-tetrahydrofolate.

The protein belongs to the Fmt family.

The enzyme catalyses L-methionyl-tRNA(fMet) + (6R)-10-formyltetrahydrofolate = N-formyl-L-methionyl-tRNA(fMet) + (6S)-5,6,7,8-tetrahydrofolate + H(+). Functionally, attaches a formyl group to the free amino group of methionyl-tRNA(fMet). The formyl group appears to play a dual role in the initiator identity of N-formylmethionyl-tRNA by promoting its recognition by IF2 and preventing the misappropriation of this tRNA by the elongation apparatus. The sequence is that of Methionyl-tRNA formyltransferase from Vibrio cholerae serotype O1 (strain ATCC 39541 / Classical Ogawa 395 / O395).